A 438-amino-acid chain; its full sequence is Glutamyl-tRNA reductase (438 aa).

Residues 55 to 58 (TCNR), Ser118, 123 to 125 (ETQ), and Gln129 contribute to the substrate site. Cys56 (nucleophile) is an active-site residue. Position 198–203 (198–203 (GAGDMI)) interacts with NADP(+).

It belongs to the glutamyl-tRNA reductase family. As to quaternary structure, homodimer.

It carries out the reaction (S)-4-amino-5-oxopentanoate + tRNA(Glu) + NADP(+) = L-glutamyl-tRNA(Glu) + NADPH + H(+). Its pathway is porphyrin-containing compound metabolism; protoporphyrin-IX biosynthesis; 5-aminolevulinate from L-glutamyl-tRNA(Glu): step 1/2. Catalyzes the NADPH-dependent reduction of glutamyl-tRNA(Glu) to glutamate 1-semialdehyde (GSA). This chain is Glutamyl-tRNA reductase, found in Polynucleobacter asymbioticus (strain DSM 18221 / CIP 109841 / QLW-P1DMWA-1) (Polynucleobacter necessarius subsp. asymbioticus).